Consider the following 315-residue polypeptide: Phosphatidylglycerol--prolipoprotein diacylglyceryl transferase (315 aa).

2 consecutive transmembrane segments (helical) span residues 19–39 (FTIH…VWIL) and 93–113 (VWEG…VAFL). Arginine 141 provides a ligand contact to a 1,2-diacyl-sn-glycero-3-phospho-(1'-sn-glycerol). The next 2 membrane-spanning stretches (helical) occupy residues 188-208 (LFHP…ALII) and 256-276 (VWTA…LYQY).

It belongs to the Lgt family.

The protein localises to the cell membrane. The enzyme catalyses L-cysteinyl-[prolipoprotein] + a 1,2-diacyl-sn-glycero-3-phospho-(1'-sn-glycerol) = an S-1,2-diacyl-sn-glyceryl-L-cysteinyl-[prolipoprotein] + sn-glycerol 1-phosphate + H(+). It participates in protein modification; lipoprotein biosynthesis (diacylglyceryl transfer). Its function is as follows. Catalyzes the transfer of the diacylglyceryl group from phosphatidylglycerol to the sulfhydryl group of the N-terminal cysteine of a prolipoprotein, the first step in the formation of mature lipoproteins. This is Phosphatidylglycerol--prolipoprotein diacylglyceryl transferase from Bifidobacterium longum (strain NCC 2705).